The sequence spans 125 residues: Large ribosomal subunit protein bL12 (125 aa).

It belongs to the bacterial ribosomal protein bL12 family. As to quaternary structure, homodimer. Part of the ribosomal stalk of the 50S ribosomal subunit. Forms a multimeric L10(L12)X complex, where L10 forms an elongated spine to which 2 to 4 L12 dimers bind in a sequential fashion. Binds GTP-bound translation factors.

Functionally, forms part of the ribosomal stalk which helps the ribosome interact with GTP-bound translation factors. Is thus essential for accurate translation. The polypeptide is Large ribosomal subunit protein bL12 (Chelativorans sp. (strain BNC1)).